Reading from the N-terminus, the 396-residue chain is L-lactate dehydrogenase (396 aa).

An FMN hydroxy acid dehydrogenase domain is found at 1–380 (MIISAASDYR…TQDSLVQGLG (380 aa)). Tyrosine 24 contacts substrate. Positions 106 and 127 each coordinate FMN. Tyrosine 129 lines the substrate pocket. FMN is bound at residue threonine 155. Arginine 164 contributes to the substrate binding site. Lysine 251 is an FMN binding site. Histidine 275 functions as the Proton acceptor in the catalytic mechanism. Arginine 278 contributes to the substrate binding site. Residue 306–330 (DSGIRNGLDVVRMIALGADTVLLGR) participates in FMN binding.

Belongs to the FMN-dependent alpha-hydroxy acid dehydrogenase family. The cofactor is FMN.

It is found in the cell inner membrane. The catalysed reaction is (S)-lactate + A = pyruvate + AH2. Catalyzes the conversion of L-lactate to pyruvate. Is coupled to the respiratory chain. The polypeptide is L-lactate dehydrogenase (Escherichia coli O7:K1 (strain IAI39 / ExPEC)).